The primary structure comprises 443 residues: FLYWCH-type zinc finger-containing protein peb-1 (443 aa).

The interval 22–49 (KPGSSDISSSSTDTSAISPISVSSMPLS) is disordered. Positions 25–42 (SSDISSSSTDTSAISPIS) are enriched in low complexity. Positions 46–203 (MPLSPDKEKK…RNKDGKPKKP (158 aa)) form a DNA-binding region, required for DNA-binding. The FLYWCH-type zinc finger occupies 69-135 (IVTSFKGYQK…NACTKGSHNH (67 aa)). The tract at residues 251–271 (PTIQIPQPIPTPIQHQQQEQS) is disordered.

It localises to the nucleus. Putative transcription factor. Binds to specific sequence motif 5'-[TC][AGT]TGCC[GA][AT]-3' in regulatory elements of target genes such as myosin myo-2. May modulate gene expression, perhaps acting in opposition to transcription factor pha-4. Involved in morphogenesis, perhaps especially in formation of the pharynx. Plays roles in molting, feeding and morphology. The sequence is that of FLYWCH-type zinc finger-containing protein peb-1 from Caenorhabditis elegans.